A 172-amino-acid chain; its full sequence is Adenine phosphoribosyltransferase (172 aa).

It belongs to the purine/pyrimidine phosphoribosyltransferase family. As to quaternary structure, homodimer.

It is found in the cytoplasm. It carries out the reaction AMP + diphosphate = 5-phospho-alpha-D-ribose 1-diphosphate + adenine. The protein operates within purine metabolism; AMP biosynthesis via salvage pathway; AMP from adenine: step 1/1. Catalyzes a salvage reaction resulting in the formation of AMP, that is energically less costly than de novo synthesis. This Nostoc punctiforme (strain ATCC 29133 / PCC 73102) protein is Adenine phosphoribosyltransferase.